We begin with the raw amino-acid sequence, 526 residues long: Bifunctional purine biosynthesis protein PurH (526 aa).

The MGS-like domain maps to 1–147 (MTKIERALIS…KNWAHVAIVT (147 aa)).

This sequence belongs to the PurH family.

The enzyme catalyses (6R)-10-formyltetrahydrofolate + 5-amino-1-(5-phospho-beta-D-ribosyl)imidazole-4-carboxamide = 5-formamido-1-(5-phospho-D-ribosyl)imidazole-4-carboxamide + (6S)-5,6,7,8-tetrahydrofolate. It carries out the reaction IMP + H2O = 5-formamido-1-(5-phospho-D-ribosyl)imidazole-4-carboxamide. Its pathway is purine metabolism; IMP biosynthesis via de novo pathway; 5-formamido-1-(5-phospho-D-ribosyl)imidazole-4-carboxamide from 5-amino-1-(5-phospho-D-ribosyl)imidazole-4-carboxamide (10-formyl THF route): step 1/1. It functions in the pathway purine metabolism; IMP biosynthesis via de novo pathway; IMP from 5-formamido-1-(5-phospho-D-ribosyl)imidazole-4-carboxamide: step 1/1. The chain is Bifunctional purine biosynthesis protein PurH from Laribacter hongkongensis (strain HLHK9).